The following is a 392-amino-acid chain: 8-amino-7-oxononanoate synthase (392 aa).

R21 contacts substrate. 108–109 (GF) provides a ligand contact to pyridoxal 5'-phosphate. Residue H133 participates in substrate binding. Residues S181, 206–209 (DDAH), and 237–240 (TLSK) each bind pyridoxal 5'-phosphate. K240 is modified (N6-(pyridoxal phosphate)lysine). T354 is a substrate binding site.

It belongs to the class-II pyridoxal-phosphate-dependent aminotransferase family. BioF subfamily. As to quaternary structure, homodimer. It depends on pyridoxal 5'-phosphate as a cofactor.

The enzyme catalyses 6-carboxyhexanoyl-[ACP] + L-alanine + H(+) = (8S)-8-amino-7-oxononanoate + holo-[ACP] + CO2. Its pathway is cofactor biosynthesis; biotin biosynthesis. Its function is as follows. Catalyzes the decarboxylative condensation of pimeloyl-[acyl-carrier protein] and L-alanine to produce 8-amino-7-oxononanoate (AON), [acyl-carrier protein], and carbon dioxide. The protein is 8-amino-7-oxononanoate synthase of Symbiobacterium thermophilum (strain DSM 24528 / JCM 14929 / IAM 14863 / T).